The sequence spans 512 residues: Mannose-1-phosphate guanylyltransferase (512 aa).

It belongs to the mannose-6-phosphate isomerase type 2 family.

The catalysed reaction is alpha-D-mannose 1-phosphate + GTP + H(+) = GDP-alpha-D-mannose + diphosphate. This is Mannose-1-phosphate guanylyltransferase (noeJ) from Sinorhizobium fredii (strain NBRC 101917 / NGR234).